The primary structure comprises 487 residues: Betaine aldehyde dehydrogenase (487 aa).

Residues serine 26 and aspartate 93 each coordinate K(+). Residue 150-152 (GAW) coordinates NAD(+). Lysine 162 serves as the catalytic Charge relay system. NAD(+) contacts are provided by residues 176-179 (KPSE) and 229-232 (SVPT). Leucine 244 provides a ligand contact to K(+). Glutamate 250 (proton acceptor) is an active-site residue. Residues glycine 252, cysteine 284, and glutamate 384 each coordinate NAD(+). The active-site Nucleophile is the cysteine 284. Residue cysteine 284 is modified to Cysteine sulfenic acid (-SOH). K(+) contacts are provided by lysine 454 and glycine 457. The Charge relay system role is filled by glutamate 461.

This sequence belongs to the aldehyde dehydrogenase family. Dimer of dimers. K(+) is required as a cofactor.

It catalyses the reaction betaine aldehyde + NAD(+) + H2O = glycine betaine + NADH + 2 H(+). It participates in amine and polyamine biosynthesis; betaine biosynthesis via choline pathway; betaine from betaine aldehyde: step 1/1. Functionally, involved in the biosynthesis of the osmoprotectant glycine betaine. Catalyzes the irreversible oxidation of betaine aldehyde to the corresponding acid. This Rhizobium johnstonii (strain DSM 114642 / LMG 32736 / 3841) (Rhizobium leguminosarum bv. viciae) protein is Betaine aldehyde dehydrogenase.